Here is a 141-residue protein sequence, read N- to C-terminus: Galactose-6-phosphate isomerase subunit LacA (141 aa).

The protein belongs to the LacAB/RpiB family. As to quaternary structure, heteromultimeric protein consisting of LacA and LacB.

The enzyme catalyses aldehydo-D-galactose 6-phosphate = keto-D-tagatose 6-phosphate. It participates in carbohydrate metabolism; D-galactose 6-phosphate degradation; D-tagatose 6-phosphate from D-galactose 6-phosphate: step 1/1. The chain is Galactose-6-phosphate isomerase subunit LacA from Streptococcus agalactiae serotype Ia (strain ATCC 27591 / A909 / CDC SS700).